Here is a 298-residue protein sequence, read N- to C-terminus: Tyrosine recombinase XerD (298 aa).

One can recognise a Core-binding (CB) domain in the interval 3 to 88 (TLEHPLIDRF…GLRGFYRYCL (86 aa)). Positions 109 to 292 (PLPKSLSEAD…ARARLQDLHA (184 aa)) constitute a Tyr recombinase domain. Active-site residues include R149, K173, H244, R247, and H270. The active-site O-(3'-phospho-DNA)-tyrosine intermediate is the Y279.

This sequence belongs to the 'phage' integrase family. XerD subfamily. In terms of assembly, forms a cyclic heterotetrameric complex composed of two molecules of XerC and two molecules of XerD.

It is found in the cytoplasm. Site-specific tyrosine recombinase, which acts by catalyzing the cutting and rejoining of the recombining DNA molecules. The XerC-XerD complex is essential to convert dimers of the bacterial chromosome into monomers to permit their segregation at cell division. It also contributes to the segregational stability of plasmids. The protein is Tyrosine recombinase XerD of Pseudomonas aeruginosa (strain ATCC 15692 / DSM 22644 / CIP 104116 / JCM 14847 / LMG 12228 / 1C / PRS 101 / PAO1).